The chain runs to 943 residues: Isoleucine--tRNA ligase (943 aa).

A 'HIGH' region motif is present at residues 58–68 (PYANGSIHIGH). Residue Glu567 coordinates L-isoleucyl-5'-AMP. The 'KMSKS' region motif lies at 608 to 612 (KMSKS). Lys611 provides a ligand contact to ATP. The Zn(2+) site is built by Cys906, Cys909, Cys926, and Cys929.

This sequence belongs to the class-I aminoacyl-tRNA synthetase family. IleS type 1 subfamily. In terms of assembly, monomer. It depends on Zn(2+) as a cofactor.

It localises to the cytoplasm. It catalyses the reaction tRNA(Ile) + L-isoleucine + ATP = L-isoleucyl-tRNA(Ile) + AMP + diphosphate. Its function is as follows. Catalyzes the attachment of isoleucine to tRNA(Ile). As IleRS can inadvertently accommodate and process structurally similar amino acids such as valine, to avoid such errors it has two additional distinct tRNA(Ile)-dependent editing activities. One activity is designated as 'pretransfer' editing and involves the hydrolysis of activated Val-AMP. The other activity is designated 'posttransfer' editing and involves deacylation of mischarged Val-tRNA(Ile). The protein is Isoleucine--tRNA ligase of Pseudomonas aeruginosa (strain LESB58).